The chain runs to 970 residues: Vacuolar membrane protease (970 aa).

A compositionally biased stretch (polar residues) spans 1–12 (MTTADSNSSATR). Residues 1–35 (MTTADSNSSATRGSHEMADGSNRVPNDEPYHRKSP) are disordered. Topologically, residues 1 to 56 (MTTADSNSSATRGSHEMADGSNRVPNDEPYHRKSPESCENANFFVRAMRASFGYRK) are cytoplasmic. Over residues 25–35 (PNDEPYHRKSP) the composition is skewed to basic and acidic residues. Residues 57-77 (TSLTILVFLSVIATVLLSYYD) traverse the membrane as a helical segment. Residues 78–397 (SSLEFSVSLP…FVVPMTFVFG (320 aa)) are Vacuolar-facing. N-linked (GlcNAc...) asparagine glycosylation is found at Asn146 and Asn173. Residues His187 and Asp199 each contribute to the Zn(2+) site. Glu234 serves as the catalytic Proton acceptor. 3 residues coordinate Zn(2+): Glu235, Glu260, and His333. A helical membrane pass occupies residues 398 to 418 (VNVLLMVLVPLVSLISLALIF). Residues 419–423 (AHRKW) lie on the Cytoplasmic side of the membrane. Residues 424 to 444 (SVSLVTFFKFPLSFILSIFLL) traverse the membrane as a helical segment. Residues 445–465 (DNFSSWFVVSVNNFLPNSSAG) are Vacuolar-facing. N-linked (GlcNAc...) asparagine glycans are attached at residues Asn446 and Asn461. Residues 466–486 (IIALTYFSFFVLANYLLLNGI) traverse the membrane as a helical segment. The Cytoplasmic portion of the chain corresponds to 487-502 (NLLFWKFKGTRHDEKL). A helical transmembrane segment spans residues 503-523 (VVILQISFMFWVSLIWSTANI). The Vacuolar portion of the chain corresponds to 524 to 535 (AKSQFNGEHSGE). A helical membrane pass occupies residues 536–556 (FLLTLLYILQAAGGVFGLLCW). At 557 to 620 (LFKRSRTVHT…PTKHYSYDWS (64 aa)) the chain is on the cytoplasmic side. Residues 621 to 641 (IQFLFIVPISSFLSYNYGWLI) form a helical membrane-spanning segment. The Vacuolar portion of the chain corresponds to 642-658 (LEGLKKTLQESATSEYL). A helical membrane pass occupies residues 659 to 679 (VFRALKLLAVVVAVPYLPFIF). Over 680–683 (KVNR) the chain is Cytoplasmic. The chain crosses the membrane as a helical span at residues 684–704 (IVFLVTIFLFVYGLGAIVISE). Topologically, residues 705–970 (PFTEANPLKL…LVNVKKSVLV (266 aa)) are vacuolar. N-linked (GlcNAc...) asparagine glycosylation is found at Asn738, Asn797, and Asn877.

Belongs to the peptidase M28 family. Zn(2+) serves as cofactor.

The protein resides in the vacuole membrane. Functionally, may be involved in vacuolar sorting and osmoregulation. This chain is Vacuolar membrane protease, found in Meyerozyma guilliermondii (strain ATCC 6260 / CBS 566 / DSM 6381 / JCM 1539 / NBRC 10279 / NRRL Y-324) (Yeast).